The chain runs to 176 residues: Large ribosomal subunit protein uL22 (176 aa).

A disordered region spans residues 113 to 176 (VVESRPSKDQ…ETSEAKGGSD (64 aa)). A compositionally biased stretch (low complexity) spans 136–152 (SKAAATAPAKKSSASKA). The span at 159 to 176 (TKAESKTSETSEAKGGSD) shows a compositional bias: basic and acidic residues.

It belongs to the universal ribosomal protein uL22 family. In terms of assembly, part of the 50S ribosomal subunit.

Functionally, this protein binds specifically to 23S rRNA; its binding is stimulated by other ribosomal proteins, e.g. L4, L17, and L20. It is important during the early stages of 50S assembly. It makes multiple contacts with different domains of the 23S rRNA in the assembled 50S subunit and ribosome. Its function is as follows. The globular domain of the protein is located near the polypeptide exit tunnel on the outside of the subunit, while an extended beta-hairpin is found that lines the wall of the exit tunnel in the center of the 70S ribosome. This is Large ribosomal subunit protein uL22 from Mycobacterium marinum (strain ATCC BAA-535 / M).